The chain runs to 221 residues: Probable GTP-binding protein EngB (221 aa).

Positions 32–205 (GIPQIAFAGR…RKIVDSLITT (174 aa)) constitute an EngB-type G domain. GTP is bound by residues 40-47 (GRSNAGKS), 67-71 (GKTKL), 85-88 (DLPG), 152-155 (TKID), and 184-186 (VSN). S47 and T69 together coordinate Mg(2+).

This sequence belongs to the TRAFAC class TrmE-Era-EngA-EngB-Septin-like GTPase superfamily. EngB GTPase family. Mg(2+) serves as cofactor.

In terms of biological role, necessary for normal cell division and for the maintenance of normal septation. This chain is Probable GTP-binding protein EngB, found in Leptospira borgpetersenii serovar Hardjo-bovis (strain JB197).